An 89-amino-acid polypeptide reads, in one-letter code: Small ribosomal subunit protein uS15 (89 aa).

This sequence belongs to the universal ribosomal protein uS15 family. As to quaternary structure, part of the 30S ribosomal subunit. Forms a bridge to the 50S subunit in the 70S ribosome, contacting the 23S rRNA.

One of the primary rRNA binding proteins, it binds directly to 16S rRNA where it helps nucleate assembly of the platform of the 30S subunit by binding and bridging several RNA helices of the 16S rRNA. Functionally, forms an intersubunit bridge (bridge B4) with the 23S rRNA of the 50S subunit in the ribosome. The chain is Small ribosomal subunit protein uS15 from Coxiella burnetii (strain CbuK_Q154) (Coxiella burnetii (strain Q154)).